Reading from the N-terminus, the 239-residue chain is Type III effector protein HopBA1 (239 aa).

A compositionally biased stretch (low complexity) spans 1–20 (MLNRISSSSPTSYVSSGSSS). The segment at 1–31 (MLNRISSSSPTSYVSSGSSSAGINPSINVRP) is disordered.

The protein localises to the secreted. It localises to the host cell. Virulence factor recognized by the A.thaliana disease resistance protein RBA1, which triggers plant cell death. HopBA1 enhances RBA1 self-association, which is necessary for ectopic autoactivation of host cell death. This chain is Type III effector protein HopBA1, found in Pseudomonas syringae pv. aptata.